Here is a 118-residue protein sequence, read N- to C-terminus: uncharacterized protein (118 aa).

This is an uncharacterized protein from Kitasatospora aureofaciens (Streptomyces aureofaciens).